We begin with the raw amino-acid sequence, 74 residues long: Putative antitoxin VapB48 (74 aa).

Possibly the antitoxin component of a type II toxin-antitoxin (TA) system. Its cognate toxin is VapC48 (Potential). The protein is Putative antitoxin VapB48 (vapB48) of Mycobacterium tuberculosis (strain CDC 1551 / Oshkosh).